The chain runs to 363 residues: GDP-fucose transporter (363 aa).

8 consecutive transmembrane segments (helical) span residues Val-30 to Leu-47, Phe-62 to Ser-79, Val-126 to Leu-148, Thr-152 to Val-171, Leu-180 to Thr-202, Leu-222 to Phe-244, Thr-251 to Gln-273, and Leu-307 to Val-326. Residues Lys-334–Val-363 form a disordered region. A compositionally biased stretch (basic and acidic residues) spans Ala-344–Gly-353.

Belongs to the TPT transporter family. SLC35C subfamily.

It is found in the golgi apparatus membrane. Its function is as follows. Involved in GDP-fucose import from the cytoplasm into the Golgi lumen. The sequence is that of GDP-fucose transporter from Caenorhabditis elegans.